We begin with the raw amino-acid sequence, 406 residues long: Tryptophan synthase beta chain (406 aa).

Residue Lys99 is modified to N6-(pyridoxal phosphate)lysine.

Belongs to the TrpB family. Tetramer of two alpha and two beta chains. Pyridoxal 5'-phosphate serves as cofactor.

The enzyme catalyses (1S,2R)-1-C-(indol-3-yl)glycerol 3-phosphate + L-serine = D-glyceraldehyde 3-phosphate + L-tryptophan + H2O. Its pathway is amino-acid biosynthesis; L-tryptophan biosynthesis; L-tryptophan from chorismate: step 5/5. Functionally, the beta subunit is responsible for the synthesis of L-tryptophan from indole and L-serine. This Rhizobium johnstonii (strain DSM 114642 / LMG 32736 / 3841) (Rhizobium leguminosarum bv. viciae) protein is Tryptophan synthase beta chain.